The sequence spans 435 residues: F-box only protein 9 (435 aa).

Residues 1–25 (MAEAEEDCHSDAVRVGDEGHESPAE) are disordered. Basic and acidic residues predominate over residues 7 to 25 (DCHSDAVRVGDEGHESPAE). The TPR repeat unit spans residues 82–115 (ARELFLKAVEEEQNGALYEAIKFYRRAMQLVPDI). Ser-124 is subject to Phosphoserine. The F-box domain maps to 173–224 (QTHISVLPMEVLMYIFRWVVSSDLDLRSLEQLSLVCRGFYICARDPEIWRLA).

In terms of assembly, part of the SCF (SKP1-CUL1-F-box) E3 ubiquitin-protein ligase complex SCF(FBXO9) composed of CUL1, SKP1, RBX1 and FBXO9. Interacts with TTI1 and TELO2; when TTI1 and TELO2 are phosphorylated by CK2.

It is found in the cytoplasm. The protein operates within protein modification; protein ubiquitination. Substrate recognition component of a SCF (SKP1-CUL1-F-box protein) E3 ubiquitin-protein ligase complex which mediates the ubiquitination and subsequent proteasomal degradation of target proteins and plays a role in several biological processes such as cell cycle, cell proliferation, or maintenance of chromosome stability. Ubiquitinates mTORC1-bound TTI1 and TELO2 when they are phosphorylated by CK2 following growth factor deprivation, leading to their degradation. In contrast, does not mediate ubiquitination of TTI1 and TELO2 when they are part of the mTORC2 complex. As a consequence, mTORC1 is inactivated to restrain cell growth and protein translation, while mTORC2 is the activated due to the relief of feedback inhibition by mTORC1. Plays a role in maintaining epithelial cell survival by regulating the turn-over of chromatin modulator PRMT4 through ubiquitination and degradation by the proteasomal pathway. Also regulates PPARgamma stability by facilitating PPARgamma/PPARG ubiquitination and thereby plays a role in adipocyte differentiation. The chain is F-box only protein 9 (Fbxo9) from Rattus norvegicus (Rat).